Consider the following 338-residue polypeptide: Nicotinate-nucleotide--dimethylbenzimidazole phosphoribosyltransferase (338 aa).

Glu-305 acts as the Proton acceptor in catalysis.

The protein belongs to the CobT family.

It carries out the reaction 5,6-dimethylbenzimidazole + nicotinate beta-D-ribonucleotide = alpha-ribazole 5'-phosphate + nicotinate + H(+). It functions in the pathway nucleoside biosynthesis; alpha-ribazole biosynthesis; alpha-ribazole from 5,6-dimethylbenzimidazole: step 1/2. In terms of biological role, catalyzes the synthesis of alpha-ribazole-5'-phosphate from nicotinate mononucleotide (NAMN) and 5,6-dimethylbenzimidazole (DMB). In Sinorhizobium fredii (strain NBRC 101917 / NGR234), this protein is Nicotinate-nucleotide--dimethylbenzimidazole phosphoribosyltransferase.